Consider the following 47-residue polypeptide: Conotoxin Bu10 (47 aa).

Positions Asp1–Arg22 are excised as a propeptide. Cystine bridges form between Cys23/Cys37, Cys30/Cys41, and Cys36/Cys46. Cys46 carries the cysteine amide modification.

Belongs to the conotoxin O1 superfamily. As to expression, expressed by the venom duct.

Its subcellular location is the secreted. The chain is Conotoxin Bu10 from Conus bullatus (Bubble cone).